Here is a 78-residue protein sequence, read N- to C-terminus: Hainantoxin-XX (78 aa).

Residues 1 to 23 (MKSATLLALSFLLIALYFLICEA) form the signal peptide. A propeptide spanning residues 24-47 (EHSRYEEHEILEENMGDVVNLEQR) is cleaved from the precursor. 3 cysteine pairs are disulfide-bonded: cysteine 49-cysteine 62, cysteine 56-cysteine 66, and cysteine 61-cysteine 77.

The protein belongs to the hainantoxin family. 20 subfamily. As to expression, expressed by the venom gland.

The protein localises to the secreted. In terms of biological role, putative ion channel inhibitor. This Cyriopagopus hainanus (Chinese bird spider) protein is Hainantoxin-XX.